The primary structure comprises 564 residues: Septation ring formation regulator EzrA (564 aa).

The Extracellular portion of the chain corresponds to 1 to 2 (MV). A helical membrane pass occupies residues 3–21 (FVISVILAIIVILTIGLIL). Over 22–564 (RKRIYDKVDH…IEENQLTLNR (543 aa)) the chain is Cytoplasmic. 4 coiled-coil regions span residues 101-140 (ANNI…REEV), 168-215 (FDKK…MEQF), 251-436 (GFDK…KKSN), and 468-537 (DIAK…ELSL).

Belongs to the EzrA family.

The protein resides in the cell membrane. Functionally, negative regulator of FtsZ ring formation; modulates the frequency and position of FtsZ ring formation. Inhibits FtsZ ring formation at polar sites. Interacts either with FtsZ or with one of its binding partners to promote depolymerization. The sequence is that of Septation ring formation regulator EzrA from Oceanobacillus iheyensis (strain DSM 14371 / CIP 107618 / JCM 11309 / KCTC 3954 / HTE831).